The primary structure comprises 638 residues: Paramyosin (638 aa).

The stretch at 1 to 638 (FSPSTTRLES…EGDISVMQAD (638 aa)) forms a coiled coil.

The protein belongs to the paramyosin family. As to quaternary structure, homodimer.

It localises to the cytoplasm. Its subcellular location is the myofibril. Its function is as follows. Paramyosin is a major structural component of many thick filaments isolated from invertebrate muscles. This chain is Paramyosin, found in Opisthorchis felineus.